The following is a 653-amino-acid chain: Asparagine--tRNA ligase, cytoplasmic (653 aa).

It belongs to the class-II aminoacyl-tRNA synthetase family.

It localises to the cytoplasm. The enzyme catalyses tRNA(Asn) + L-asparagine + ATP = L-asparaginyl-tRNA(Asn) + AMP + diphosphate + H(+). The protein is Asparagine--tRNA ligase, cytoplasmic (asnS1) of Dictyostelium discoideum (Social amoeba).